The sequence spans 553 residues: Probable malate:quinone oxidoreductase (553 aa).

Positions 534–543 are enriched in low complexity; that stretch reads QLKPQVQPQP. Residues 534–553 are disordered; the sequence is QLKPQVQPQPAHKAVADIAL.

It belongs to the MQO family. The cofactor is FAD.

It carries out the reaction (S)-malate + a quinone = a quinol + oxaloacetate. Its pathway is carbohydrate metabolism; tricarboxylic acid cycle; oxaloacetate from (S)-malate (quinone route): step 1/1. This Citrobacter koseri (strain ATCC BAA-895 / CDC 4225-83 / SGSC4696) protein is Probable malate:quinone oxidoreductase.